The chain runs to 798 residues: Acetamidase regulatory protein (798 aa).

The zn(2)-C6 fungal-type DNA-binding region spans 20–50 (CVHCHRRKVRCDARLVGLPCSNCRSAGKTDC). Disordered regions lie at residues 68–96 (VPIRCRPPNPEEAPKPISSLSPSSEPPNA), 115–172 (ANRV…ESRA), and 632–714 (LRTT…TLSA). Low complexity-rich tracts occupy residues 82-94 (KPISSLSPSSEPP) and 133-147 (TRSNNNSGNNTQYQN). Residues 632–641 (LRTTTSDRPR) are compositionally biased toward basic and acidic residues. Positions 644–663 (SNLSNNSTNSPASQQKNTSG) are enriched in polar residues. Residues 678 to 687 (PSAPSIPPLQ) are compositionally biased toward pro residues.

The protein resides in the nucleus. Positively regulates the expression of 5 genes involved in the catabolism of certain amides (amdS), omega amino acids (gatA and gabA), and lactams (lamA and lamB) in the presence of omega amino acid inducers. In Emericella nidulans (strain FGSC A4 / ATCC 38163 / CBS 112.46 / NRRL 194 / M139) (Aspergillus nidulans), this protein is Acetamidase regulatory protein (amdR).